Here is a 152-residue protein sequence, read N- to C-terminus: Deoxyuridine 5'-triphosphate nucleotidohydrolase (152 aa).

Residues 71-73 (RSG), N84, 88-90 (LID), and M98 each bind substrate.

Belongs to the dUTPase family. The cofactor is Mg(2+).

The enzyme catalyses dUTP + H2O = dUMP + diphosphate + H(+). It functions in the pathway pyrimidine metabolism; dUMP biosynthesis; dUMP from dCTP (dUTP route): step 2/2. Its function is as follows. This enzyme is involved in nucleotide metabolism: it produces dUMP, the immediate precursor of thymidine nucleotides and it decreases the intracellular concentration of dUTP so that uracil cannot be incorporated into DNA. The polypeptide is Deoxyuridine 5'-triphosphate nucleotidohydrolase (Serratia proteamaculans (strain 568)).